A 232-amino-acid chain; its full sequence is 7-cyano-7-deazaguanine synthase (232 aa).

Residue 8 to 18 (FSGGQDSTTCL) participates in ATP binding. Positions 187, 196, 199, and 202 each coordinate Zn(2+).

It belongs to the QueC family. Requires Zn(2+) as cofactor.

The enzyme catalyses 7-carboxy-7-deazaguanine + NH4(+) + ATP = 7-cyano-7-deazaguanine + ADP + phosphate + H2O + H(+). It functions in the pathway purine metabolism; 7-cyano-7-deazaguanine biosynthesis. Its function is as follows. Catalyzes the ATP-dependent conversion of 7-carboxy-7-deazaguanine (CDG) to 7-cyano-7-deazaguanine (preQ(0)). The protein is 7-cyano-7-deazaguanine synthase of Photobacterium profundum (strain SS9).